The sequence spans 420 residues: D-tagatose-1,6-bisphosphate aldolase subunit GatZ (420 aa).

Belongs to the GatZ/KbaZ family. GatZ subfamily. As to quaternary structure, forms a complex with GatY.

It functions in the pathway carbohydrate metabolism; D-tagatose 6-phosphate degradation; D-glyceraldehyde 3-phosphate and glycerone phosphate from D-tagatose 6-phosphate: step 2/2. Component of the tagatose-1,6-bisphosphate aldolase GatYZ that is required for full activity and stability of the Y subunit. Could have a chaperone-like function for the proper and stable folding of GatY. When expressed alone, GatZ does not show any aldolase activity. Is involved in the catabolism of galactitol. The chain is D-tagatose-1,6-bisphosphate aldolase subunit GatZ from Shigella boydii serotype 18 (strain CDC 3083-94 / BS512).